The following is a 1049-amino-acid chain: MSSRGGGGGGRRGGRGGGGGREGGGGGGGGGGRGGQGRGDLGVVGERQGGGRGAGERGGRHDAPRGRGGVAVGAGAGRQQQQPFHAPAPPSGGGGRGGVQVQPNAAARRPVGGGRGGVGVPAPAPAVAVGALCGEMKGKMVVSGGAPPAGQGSSLAAAQGTDNVKREPSQVAAPAPAPPPATLPPSSSKAVTFPARPDVGTIGRRCRVRANHFLVQVADKDIYHYDVVITPESTYRERNRSIINKLVALHKQFLDGRLPVYDGRKSIYTAGPLPFKTKDFVVKHINPLRGNQREEEYKVTIKQASKTDLYSLKQFLVGRQRELPQDTIQALDIALRECPTSVNFTCDRYVSISRSFFSQSFGHGGEIGSGTECWRGYYQSLRPTQMGLSLNIDISATAFYKAQPVMDFAVQYLNIRDVSRRLSDQDRIKLKKALKGVQIVATHWKEKSIRYKITGIPSAPMNELMFDLDGNRISVVQYFKKQYNYSLKHVNWPCLQAGSDSRPKYLPMEVCSILEGQRYSKKLNEHQVTNILRMTCERPAQRESSIIEIVNTNSYGNDDCAKEFGIKVANQLAVVDARVLPTPRLKYHDSGREKVCNPSVGQWNMINKRMVNGGCINHWTCLSFASRMHVNDIRMFCEDLVGMCNNIGMQMNTRPCVDIIQGQQRNIEGAIRNIHRQSSEKLDQQDLTGQQLQLLIVILTEISGSYGRIKRICETEVGVITQCCAPKSLQKGGKQYLENLALKMNVKVGGRNTVLEDALHKKIPILTDRPTIVFGADVTHPSPGEDASPSIAAVVASMDWPEVTKYKCLVSTQSHREEIISNLYTEVKDPLKGIIRGGMIRELLRSFYQETGQKPSRIIFYRDGISEGQFSQVLLYEMDAIRKACASLQEGYLPPVTFVVVQKRHHTRLFPENRRDMMDRSGNILPGTVVDTMICHPSEFDFYLCSHSGIKGTSRPTHYHVLLDENGFKADTLQTLTYNLSYTYARCTRAVSIVPPAYYAHLGAFRARYYMEDEHSDQGSSSSVTTRTDRSTKPLPEIKENVKRFMFYC.

Positions 1-53 are enriched in gly residues; that stretch reads MSSRGGGGGGRRGGRGGGGGREGGGGGGGGGGRGGQGRGDLGVVGERQGGGRG. 2 disordered regions span residues 1 to 101 and 144 to 192; these read MSSR…GVQV and GGAP…KAVT. A compositionally biased stretch (basic and acidic residues) spans 54-65; that stretch reads AGERGGRHDAPR. Positions 66–76 are enriched in gly residues; it reads GRGGVAVGAGA. Low complexity predominate over residues 144-160; it reads GGAPPAGQGSSLAAAQG. A PAZ domain is found at 404–515; sequence PVMDFAVQYL…LPMEVCSILE (112 aa). The Piwi domain occupies 694–1012; it reads LLIVILTEIS…GAFRARYYME (319 aa).

Belongs to the argonaute family. Ago subfamily.

Functionally, probably involved in the RNA silencing pathway. May bind to short RNAs such as microRNAs (miRNAs) or short interfering RNAs (siRNAs), and represses the translation of mRNAs which are complementary to them. This chain is Protein argonaute 12 (AGO12), found in Oryza sativa subsp. japonica (Rice).